The primary structure comprises 301 residues: Protoheme IX farnesyltransferase (301 aa).

9 helical membrane-spanning segments follow: residues 34–54 (LVVF…HPLI), 55–75 (GLVS…FNMW), 102–121 (AWEC…AIAV), 125–144 (SALL…TMLL), 152–172 (IVIG…SVSG), 181–201 (LFAI…LLTL), 222–242 (SHIL…GLFV), 247–267 (LYEI…IAVF), and 280–300 (GLFK…IACV).

The protein belongs to the UbiA prenyltransferase family. Protoheme IX farnesyltransferase subfamily.

Its subcellular location is the cell inner membrane. It carries out the reaction heme b + (2E,6E)-farnesyl diphosphate + H2O = Fe(II)-heme o + diphosphate. It functions in the pathway porphyrin-containing compound metabolism; heme O biosynthesis; heme O from protoheme: step 1/1. Converts heme B (protoheme IX) to heme O by substitution of the vinyl group on carbon 2 of heme B porphyrin ring with a hydroxyethyl farnesyl side group. This is Protoheme IX farnesyltransferase from Anaplasma marginale (strain Florida).